A 318-amino-acid chain; its full sequence is Ornithine carbamoyltransferase (318 aa).

Residues 63–66 (STRT), Gln-90, Arg-114, and 141–144 (HPCQ) contribute to the carbamoyl phosphate site. L-ornithine-binding positions include Asn-172, Asp-235, and 239–240 (SM). Residues 275-276 (CL) and Arg-303 contribute to the carbamoyl phosphate site.

The protein belongs to the aspartate/ornithine carbamoyltransferase superfamily. OTCase family.

It is found in the cytoplasm. It carries out the reaction carbamoyl phosphate + L-ornithine = L-citrulline + phosphate + H(+). Its pathway is amino-acid biosynthesis; L-arginine biosynthesis; L-arginine from L-ornithine and carbamoyl phosphate: step 1/3. In terms of biological role, reversibly catalyzes the transfer of the carbamoyl group from carbamoyl phosphate (CP) to the N(epsilon) atom of ornithine (ORN) to produce L-citrulline. In Prochlorococcus marinus (strain SARG / CCMP1375 / SS120), this protein is Ornithine carbamoyltransferase.